The chain runs to 274 residues: ATP synthase subunit a (274 aa).

Helical transmembrane passes span 43–63, 103–123, 149–169, 223–243, and 245–265; these read TLNI…LLVF, VIAP…MMDL, DVSI…FYSI, LIFI…LSVP, and AIFH…LTIV.

The protein belongs to the ATPase A chain family. As to quaternary structure, F-type ATPases have 2 components, CF(1) - the catalytic core - and CF(0) - the membrane proton channel. CF(1) has five subunits: alpha(3), beta(3), gamma(1), delta(1), epsilon(1). CF(0) has three main subunits: a(1), b(2) and c(9-12). The alpha and beta chains form an alternating ring which encloses part of the gamma chain. CF(1) is attached to CF(0) by a central stalk formed by the gamma and epsilon chains, while a peripheral stalk is formed by the delta and b chains.

Its subcellular location is the cell inner membrane. Functionally, key component of the proton channel; it plays a direct role in the translocation of protons across the membrane. The polypeptide is ATP synthase subunit a (Yersinia pestis bv. Antiqua (strain Antiqua)).